The sequence spans 287 residues: Small ribosomal subunit biogenesis GTPase RsgA (287 aa).

The 158-residue stretch at 61-218 (SSELIRPTVA…LVDTPGFTTL (158 aa)) folds into the CP-type G domain. Residues 110–113 (NKED) and 161–169 (GPSGAGKST) contribute to the GTP site. Zn(2+) contacts are provided by C242, C247, H249, and C255.

Belongs to the TRAFAC class YlqF/YawG GTPase family. RsgA subfamily. As to quaternary structure, monomer. Associates with 30S ribosomal subunit, binds 16S rRNA. Zn(2+) serves as cofactor.

The protein resides in the cytoplasm. In terms of biological role, one of several proteins that assist in the late maturation steps of the functional core of the 30S ribosomal subunit. Helps release RbfA from mature subunits. May play a role in the assembly of ribosomal proteins into the subunit. Circularly permuted GTPase that catalyzes slow GTP hydrolysis, GTPase activity is stimulated by the 30S ribosomal subunit. In Clostridium perfringens (strain SM101 / Type A), this protein is Small ribosomal subunit biogenesis GTPase RsgA.